The sequence spans 58 residues: MMSRLSVFILIALVLSVIIDVLNNSKVEGACVENCRKYCQDKGARNGKCINSNCHCYY.

Residues 1 to 29 (MMSRLSVFILIALVLSVIIDVLNNSKVEG) form the signal peptide. 3 disulfide bridges follow: cysteine 31–cysteine 49, cysteine 35–cysteine 54, and cysteine 39–cysteine 56.

It belongs to the short scorpion toxin superfamily. Potassium channel inhibitor family. Alpha-KTx 26 subfamily. In terms of tissue distribution, expressed by the venom gland.

It localises to the secreted. Functionally, recombinant toxin that reversibly blocks the voltage-gated potassium channels Shaker (IC(50)=0.054 nM), rKv1.2/KCNA2 (IC(50)=15.6 nM), and rKv1.3/KCNA3 (IC(50)=12.5 uM). In Olivierus martensii (Manchurian scorpion), this protein is Mesomartoxin.